A 313-amino-acid polypeptide reads, in one-letter code: tRNA dimethylallyltransferase (313 aa).

9–16 (GPTAVGKT) serves as a coordination point for ATP. 11 to 16 (TAVGKT) lines the substrate pocket. The tract at residues 34–37 (DSMQ) is interaction with substrate tRNA.

The protein belongs to the IPP transferase family. As to quaternary structure, monomer. Mg(2+) serves as cofactor.

The enzyme catalyses adenosine(37) in tRNA + dimethylallyl diphosphate = N(6)-dimethylallyladenosine(37) in tRNA + diphosphate. Catalyzes the transfer of a dimethylallyl group onto the adenine at position 37 in tRNAs that read codons beginning with uridine, leading to the formation of N6-(dimethylallyl)adenosine (i(6)A). The chain is tRNA dimethylallyltransferase from Lachnoclostridium phytofermentans (strain ATCC 700394 / DSM 18823 / ISDg) (Clostridium phytofermentans).